The sequence spans 245 residues: Ribonuclease PH (245 aa).

Residues Arg93 and 131–133 (GTR) each bind phosphate.

It belongs to the RNase PH family. In terms of assembly, homohexameric ring arranged as a trimer of dimers.

It catalyses the reaction tRNA(n+1) + phosphate = tRNA(n) + a ribonucleoside 5'-diphosphate. Phosphorolytic 3'-5' exoribonuclease that plays an important role in tRNA 3'-end maturation. Removes nucleotide residues following the 3'-CCA terminus of tRNAs; can also add nucleotides to the ends of RNA molecules by using nucleoside diphosphates as substrates, but this may not be physiologically important. Probably plays a role in initiation of 16S rRNA degradation (leading to ribosome degradation) during starvation. This chain is Ribonuclease PH, found in Corynebacterium efficiens (strain DSM 44549 / YS-314 / AJ 12310 / JCM 11189 / NBRC 100395).